Consider the following 335-residue polypeptide: Holliday junction branch migration complex subunit RuvB (335 aa).

The tract at residues 1–183 (MDERIISSET…FGVIDHLEFY (183 aa)) is large ATPase domain (RuvB-L). Residues leucine 22, arginine 23, glycine 64, lysine 67, threonine 68, threonine 69, 130–132 (EDY), arginine 173, tyrosine 183, and arginine 220 contribute to the ATP site. Threonine 68 is a binding site for Mg(2+). The small ATPAse domain (RuvB-S) stretch occupies residues 184-254 (TEEQLTEIVL…LAKEALTLLQ (71 aa)). The segment at 257-335 (PRGLDTIDQK…HLGISYEKEV (79 aa)) is head domain (RuvB-H). DNA-binding residues include arginine 293, arginine 312, and arginine 317.

The protein belongs to the RuvB family. Homohexamer. Forms an RuvA(8)-RuvB(12)-Holliday junction (HJ) complex. HJ DNA is sandwiched between 2 RuvA tetramers; dsDNA enters through RuvA and exits via RuvB. An RuvB hexamer assembles on each DNA strand where it exits the tetramer. Each RuvB hexamer is contacted by two RuvA subunits (via domain III) on 2 adjacent RuvB subunits; this complex drives branch migration. In the full resolvosome a probable DNA-RuvA(4)-RuvB(12)-RuvC(2) complex forms which resolves the HJ.

The protein resides in the cytoplasm. It catalyses the reaction ATP + H2O = ADP + phosphate + H(+). Functionally, the RuvA-RuvB-RuvC complex processes Holliday junction (HJ) DNA during genetic recombination and DNA repair, while the RuvA-RuvB complex plays an important role in the rescue of blocked DNA replication forks via replication fork reversal (RFR). RuvA specifically binds to HJ cruciform DNA, conferring on it an open structure. The RuvB hexamer acts as an ATP-dependent pump, pulling dsDNA into and through the RuvAB complex. RuvB forms 2 homohexamers on either side of HJ DNA bound by 1 or 2 RuvA tetramers; 4 subunits per hexamer contact DNA at a time. Coordinated motions by a converter formed by DNA-disengaged RuvB subunits stimulates ATP hydrolysis and nucleotide exchange. Immobilization of the converter enables RuvB to convert the ATP-contained energy into a lever motion, pulling 2 nucleotides of DNA out of the RuvA tetramer per ATP hydrolyzed, thus driving DNA branch migration. The RuvB motors rotate together with the DNA substrate, which together with the progressing nucleotide cycle form the mechanistic basis for DNA recombination by continuous HJ branch migration. Branch migration allows RuvC to scan DNA until it finds its consensus sequence, where it cleaves and resolves cruciform DNA. The polypeptide is Holliday junction branch migration complex subunit RuvB (Listeria innocua serovar 6a (strain ATCC BAA-680 / CLIP 11262)).